The sequence spans 1070 residues: uncharacterized protein (1070 aa).

The 47-residue stretch at 477-523 (LIDTNQLLLRQLQQIVKLGIFNEKKIKEELKANKFNEQVALQILESE) folds into the UBA domain.

This is an uncharacterized protein from Sulfolobus islandicus rod-shaped virus 1 (SIRV-1).